We begin with the raw amino-acid sequence, 398 residues long: S-adenosylmethionine synthase (398 aa).

Residue histidine 16 participates in ATP binding. Position 18 (aspartate 18) interacts with Mg(2+). Glutamate 51 contacts K(+). 2 residues coordinate L-methionine: glutamate 64 and glutamine 108. The tract at residues 108-118 is flexible loop; sequence QSADIAQGVDA. ATP-binding positions include 176-178, 242-243, aspartate 251, 257-258, alanine 274, and lysine 278; these read DSK, KF, and RK. Aspartate 251 contacts L-methionine. Lysine 282 contributes to the L-methionine binding site.

The protein belongs to the AdoMet synthase family. Homotetramer; dimer of dimers. Mg(2+) serves as cofactor. The cofactor is K(+).

It localises to the cytoplasm. It carries out the reaction L-methionine + ATP + H2O = S-adenosyl-L-methionine + phosphate + diphosphate. The protein operates within amino-acid biosynthesis; S-adenosyl-L-methionine biosynthesis; S-adenosyl-L-methionine from L-methionine: step 1/1. Functionally, catalyzes the formation of S-adenosylmethionine (AdoMet) from methionine and ATP. The overall synthetic reaction is composed of two sequential steps, AdoMet formation and the subsequent tripolyphosphate hydrolysis which occurs prior to release of AdoMet from the enzyme. In Rhodopseudomonas palustris (strain HaA2), this protein is S-adenosylmethionine synthase.